The following is a 919-amino-acid chain: TRPM8 channel-associated factor 2 (919 aa).

Residues 542–841 form the Peptidase M60 domain; sequence DCWVSTGLYL…TYLQLQEAFG (300 aa).

This sequence belongs to the TCAF family. Isoform 2 interacts with TRPM8 (via N-terminus and C-terminus domains); the interaction inhibits TRPM8 channel activity. Interacts with TRPV6. As to expression, isoform 2 is expressed in the prostate and in cancerous prostate samples.

The protein localises to the cell membrane. In terms of biological role, negatively regulates the plasma membrane cation channel TRPM8 activity. Involved in the recruitment of TRPM8 to the cell surface. Promotes prostate cancer cell migration stimulation in a TRPM8-dependent manner. This Homo sapiens (Human) protein is TRPM8 channel-associated factor 2.